The chain runs to 193 residues: Ion-translocating oxidoreductase complex subunit A (193 aa).

The next 6 helical transmembrane spans lie at 5–25 (ILLI…FLGL), 39–59 (IGMG…AYLV), 65–85 (IPLE…AVIV), 102–122 (LLGI…VALL), 134–154 (VLYG…FAAL), and 171–191 (SIAL…TGLV).

This sequence belongs to the NqrDE/RnfAE family. The complex is composed of six subunits: RnfA, RnfB, RnfC, RnfD, RnfE and RnfG.

Its subcellular location is the cell inner membrane. Part of a membrane-bound complex that couples electron transfer with translocation of ions across the membrane. The protein is Ion-translocating oxidoreductase complex subunit A of Actinobacillus pleuropneumoniae serotype 5b (strain L20).